The chain runs to 382 residues: ATP phosphoribosyltransferase regulatory subunit (382 aa).

It belongs to the class-II aminoacyl-tRNA synthetase family. HisZ subfamily. Heteromultimer composed of HisG and HisZ subunits.

The protein localises to the cytoplasm. Its pathway is amino-acid biosynthesis; L-histidine biosynthesis; L-histidine from 5-phospho-alpha-D-ribose 1-diphosphate: step 1/9. Functionally, required for the first step of histidine biosynthesis. May allow the feedback regulation of ATP phosphoribosyltransferase activity by histidine. In Acidovorax sp. (strain JS42), this protein is ATP phosphoribosyltransferase regulatory subunit.